A 448-amino-acid polypeptide reads, in one-letter code: Tubulin alpha-2 chain (448 aa).

Residues Gln11, Glu69, Ser138, Gly142, Thr143, Thr177, Asn204, and Asn226 each coordinate GTP. A Mg(2+)-binding site is contributed by Glu69. The active site involves Glu252. Positions 428–448 (KDYEEVGADSNEGGEEEGEEY) are disordered. Positions 429–448 (DYEEVGADSNEGGEEEGEEY) are enriched in acidic residues.

This sequence belongs to the tubulin family. In terms of assembly, dimer of alpha and beta chains. A typical microtubule is a hollow water-filled tube with an outer diameter of 25 nm and an inner diameter of 15 nM. Alpha-beta heterodimers associate head-to-tail to form protofilaments running lengthwise along the microtubule wall with the beta-tubulin subunit facing the microtubule plus end conferring a structural polarity. Microtubules usually have 13 protofilaments but different protofilament numbers can be found in some organisms and specialized cells. It depends on Mg(2+) as a cofactor. Undergoes a tyrosination/detyrosination cycle, the cyclic removal and re-addition of a C-terminal tyrosine residue. As to expression, expressed in intestine, pharyngeal muscle cells, and a subset of neurons.

Its subcellular location is the cytoplasm. The protein resides in the cytoskeleton. It carries out the reaction GTP + H2O = GDP + phosphate + H(+). In terms of biological role, tubulin is the major constituent of microtubules, a cylinder consisting of laterally associated linear protofilaments composed of alpha- and beta-tubulin heterodimers. Microtubules grow by the addition of GTP-tubulin dimers to the microtubule end, where a stabilizing cap forms. Below the cap, tubulin dimers are in GDP-bound state, owing to GTPase activity of alpha-tubulin. Required for the normal dynamic behavior of the non-centrosomal microtubules in the epidermal syncytium. Involved in the redistribution of microtubule end-binding protein EB1/ebp-2 caused by wounding. Required to modulate expression in the epidermis of antimicrobial peptides, such as nlp-29, after wounding, or fungal infection. This is Tubulin alpha-2 chain (tba-2) from Caenorhabditis elegans.